Reading from the N-terminus, the 671-residue chain is Arginine--tRNA ligase (671 aa).

A 'HIGH' region motif is present at residues P124–H134. A disordered region spans residues K223–A254. Positions S224–S233 are enriched in basic and acidic residues.

The protein belongs to the class-I aminoacyl-tRNA synthetase family. Monomer.

It is found in the cytoplasm. The catalysed reaction is tRNA(Arg) + L-arginine + ATP = L-arginyl-tRNA(Arg) + AMP + diphosphate. The sequence is that of Arginine--tRNA ligase from Rhodopirellula baltica (strain DSM 10527 / NCIMB 13988 / SH1).